The sequence spans 853 residues: Auxin response factor 23 (853 aa).

The tract at residues 121–141 (KQQEDNGSTEEEVPSAPAAGH) is disordered. The TF-B3 DNA-binding region spans 149–251 (FCKTLTASDT…ELRVGVRRAM (103 aa)). 2 disordered regions span residues 422 to 471 (ESEP…NNTP) and 647 to 723 (PAKS…QGVS). The span at 425–455 (PNGTQRTFQTQENATPKSGFGNSSELESAQK) shows a compositional bias: polar residues. Positions 672–686 (EWRRPDVTEVEKCSD) are enriched in basic and acidic residues. Positions 706-723 (PSSQQASRNMSCKSQGVS) are enriched in polar residues. The PB1 domain maps to 725–809 (RSCKKVHKQG…HKIFIYTREE (85 aa)). The disordered stretch occupies residues 815 to 853 (PGTLNSRSEDSHANSMERGSVGREMRGCLSTSSLNSENC). Polar residues predominate over residues 843 to 853 (LSTSSLNSENC).

It belongs to the ARF family. Homodimers and heterodimers.

It localises to the nucleus. In terms of biological role, auxin response factors (ARFs) are transcriptional factors that bind specifically to the DNA sequence 5'-TGTCTC-3' found in the auxin-responsive promoter elements (AuxREs). The chain is Auxin response factor 23 (ARF23) from Oryza sativa subsp. indica (Rice).